Here is a 299-residue protein sequence, read N- to C-terminus: Ciliary microtubule inner protein 2B (299 aa).

It belongs to the CIMIP2 family. In terms of tissue distribution, expressed in airway epithelial cells.

The protein localises to the cytoplasm. The protein resides in the cytoskeleton. It is found in the cilium axoneme. Its function is as follows. Microtubule inner protein (MIP) part of the dynein-decorated doublet microtubules (DMTs) in cilia axoneme, which is required for motile cilia beating. This is Ciliary microtubule inner protein 2B (cimip2b) from Danio rerio (Zebrafish).